Here is a 449-residue protein sequence, read N- to C-terminus: Probable glycosyltransferase 5 (449 aa).

The segment covering 1-14 (MMEKHGGKVTSDRR) has biased composition (basic and acidic residues). The interval 1–24 (MMEKHGGKVTSDRRAGRRQHGQRC) is disordered. At 1–28 (MMEKHGGKVTSDRRAGRRQHGQRCSASD) the chain is on the cytoplasmic side. The chain crosses the membrane as a helical; Signal-anchor for type II membrane protein span at residues 29–49 (AAPLVVVVILIVAALFLILGP). Topologically, residues 50 to 449 (TGSSSFTVPR…HPTFRAARPT (400 aa)) are lumenal. The tract at residues 74 to 109 (APPPPPPPAQMQAGANASSEEDSGLPPPRQLTDPPY) is disordered. N89, N413, and N422 each carry an N-linked (GlcNAc...) asparagine glycan.

The protein belongs to the glycosyltransferase 34 family.

The protein localises to the golgi apparatus membrane. Its function is as follows. Probable glycosyltransferase that may be involved in the biosynthesis of xyloglucan. The polypeptide is Probable glycosyltransferase 5 (Oryza sativa subsp. japonica (Rice)).